A 425-amino-acid chain; its full sequence is RNA-binding protein L (425 aa).

Positions 1–20 (MQQPPSQPQPGMGGPPPPPQ) are enriched in pro residues. The segment at 1 to 82 (MQQPPSQPQP…AAPPPQAMPA (82 aa)) is disordered. Residues 21 to 31 (GAAGQPPQWGA) are compositionally biased toward low complexity. Pro residues predominate over residues 32 to 80 (IPPPMPPHQYGAPPPQQPPAMWGQPPPQAHYGQVPPPQPYYAAPPPQAM). RRM domains lie at 90–170 (KTLW…WASA), 180–259 (YTIF…PAAN), and 284–356 (TTIF…WGRS).

This sequence belongs to the polyadenylate-binding RBP45 family. As to quaternary structure, interacts with RBP-P. Interacts with RAB5A.

The protein localises to the nucleus. It is found in the cytoplasm. Functionally, RNA-binding protein that binds to a cis-localization element or zipcode, within the 5'-CDS of prolamine RNA. Binds strongly to glutelin and prolamin mRNAs, particularly to 3'-UTR and zipcode RNA. Recognizes and binds to glutelin zipcode RNA, which is required for proper mRNA localization to cisternal endoplasmic reticulum. Recognizes and binds to prolamin zipcode RNA, which is required for proper mRNA localization to the protein body endoplasmic reticulum that delimits the prolamine intracisternal inclusion granules. Required for the correct localization of glutelin and prolamine mRNA in endosperm cells during grain development. RBP-L and RBP-P form a quaternary complex with the membrane trafficking factors NSF and RAB5A. This quaternay complex carries glutelin mRNAs for active transport on endosomes to the cortical endoplasmic reticulum membrane, and enables endosome-mediated glutelin mRNA transport in endosperm cells. The polypeptide is RNA-binding protein L (Oryza sativa subsp. japonica (Rice)).